An 85-amino-acid polypeptide reads, in one-letter code: UPF0291 protein SSA_1878 (85 aa).

The tract at residues 58 to 85 (GNDVTPEKLRQVQREKGLHGRSLDDPES) is disordered. Positions 62-85 (TPEKLRQVQREKGLHGRSLDDPES) are enriched in basic and acidic residues.

Belongs to the UPF0291 family.

It is found in the cytoplasm. The polypeptide is UPF0291 protein SSA_1878 (Streptococcus sanguinis (strain SK36)).